Consider the following 636-residue polypeptide: uncharacterized protein (636 aa).

The next 3 membrane-spanning stretches (helical) occupy residues 12–32, 34–54, and 75–95; these read AVIY…FGSI, IMHL…TTTG, and IGAG…FMSF. Residues 112–231 enclose the RCK N-terminal domain; sequence KNHFILCGFG…KKAGANRIIS (120 aa).

Its subcellular location is the cell membrane. This is an uncharacterized protein from Methanothermus fervidus (strain ATCC 43054 / DSM 2088 / JCM 10308 / V24 S).